A 417-amino-acid chain; its full sequence is Histidine--tRNA ligase (417 aa).

Belongs to the class-II aminoacyl-tRNA synthetase family.

Its subcellular location is the cytoplasm. It catalyses the reaction tRNA(His) + L-histidine + ATP = L-histidyl-tRNA(His) + AMP + diphosphate + H(+). In Pyrobaculum neutrophilum (strain DSM 2338 / JCM 9278 / NBRC 100436 / V24Sta) (Thermoproteus neutrophilus), this protein is Histidine--tRNA ligase.